Here is a 330-residue protein sequence, read N- to C-terminus: Beta-hexosaminidase (330 aa).

Residues Asp62, Arg70, Arg130, and 160-161 (KH) contribute to the substrate site. Catalysis depends on His173, which acts as the Proton donor/acceptor. Asp242 serves as the catalytic Nucleophile.

This sequence belongs to the glycosyl hydrolase 3 family. NagZ subfamily. As to quaternary structure, monomer.

Its subcellular location is the cytoplasm. The catalysed reaction is Hydrolysis of terminal non-reducing N-acetyl-D-hexosamine residues in N-acetyl-beta-D-hexosaminides.. Its pathway is cell wall biogenesis; peptidoglycan recycling. Plays a role in peptidoglycan recycling by cleaving the terminal beta-1,4-linked N-acetylglucosamine (GlcNAc) from peptide-linked peptidoglycan fragments, giving rise to free GlcNAc, anhydro-N-acetylmuramic acid and anhydro-N-acetylmuramic acid-linked peptides. Plays a role in beta-lactam antibiotic resistance via its role in generating anhydro-N-acetylmuramic acid-linked peptides; these peptides function as signaling molecules that induce high-level expression of the beta-lactamase AmpC. The protein is Beta-hexosaminidase of Vibrio cholerae serotype O1 (strain ATCC 39315 / El Tor Inaba N16961).